A 262-amino-acid polypeptide reads, in one-letter code: Sulfite reductase, dissimilatory-type subunit beta (262 aa).

The [4Fe-4S] cluster site is built by C151, C188, C189, C193, C231, C258, and C261. C193 provides a ligand contact to siroheme.

As to quaternary structure, heterohexamer of two alpha, two beta and two gamma subunits. [4Fe-4S] cluster serves as cofactor. Siroheme is required as a cofactor.

The catalysed reaction is [DsrC protein]-trisulfide + NAD(+) + 3 H2O = [DsrC protein]-dithiol + sulfite + NADH + 3 H(+). Functionally, catalyzes the reduction of sulfite to sulfide. This is the terminal oxidation reaction in sulfate respiration, a process catalyzed by the sulfate-reducing bacteria. This is Sulfite reductase, dissimilatory-type subunit beta (dsrB) from Megalodesulfovibrio gigas (strain ATCC 19364 / DSM 1382 / NCIMB 9332 / VKM B-1759) (Desulfovibrio gigas).